We begin with the raw amino-acid sequence, 168 residues long: MAPPPPSLASRMAALILRILTFIFLIASLVILTTNTATLELDLVEVKVHFKDVYAYRYMLATIVIGLAYTVLQIAFTLYYVATGNRMMSGDGNLAFDFFGDKVISYILVTGAAAGFASTKDIKPVFSGSGDFDAFINKGYASASLLLIGFVCTAVLSVFSSYALPKQV.

The Cytoplasmic portion of the chain corresponds to 1–11 (MAPPPPSLASR). A helical transmembrane segment spans residues 12–32 (MAALILRILTFIFLIASLVIL). Over 33–57 (TTNTATLELDLVEVKVHFKDVYAYR) the chain is Extracellular. A helical transmembrane segment spans residues 58–78 (YMLATIVIGLAYTVLQIAFTL). Residues 79–97 (YYVATGNRMMSGDGNLAFD) lie on the Cytoplasmic side of the membrane. The chain crosses the membrane as a helical span at residues 98–118 (FFGDKVISYILVTGAAAGFAS). Residues 119–144 (TKDIKPVFSGSGDFDAFINKGYASAS) are Extracellular-facing. The chain crosses the membrane as a helical span at residues 145–165 (LLLIGFVCTAVLSVFSSYALP). Over 166–168 (KQV) the chain is Cytoplasmic.

It belongs to the Casparian strip membrane proteins (CASP) family. In terms of assembly, homodimer and heterodimers.

The protein localises to the cell membrane. In Ricinus communis (Castor bean), this protein is CASP-like protein 4D1.